We begin with the raw amino-acid sequence, 117 residues long: MALKDTAKKMRDLLESIQRDLDKAERGNKAAAQRVRTDSIKLEKVAKVYRKESIKAEKSGLMTRKPATKAKKAAATKKAAPKPKIQAKAAPKAKATTKKTPAKAKAKKSSKSRYLRK.

The segment at 57 to 117 (EKSGLMTRKP…KSSKSRYLRK (61 aa)) is disordered. The segment covering 66–81 (PATKAKKAAATKKAAP) has biased composition (basic residues). Over residues 82-94 (KPKIQAKAAPKAK) the composition is skewed to low complexity. The span at 95–117 (ATTKKTPAKAKAKKSSKSRYLRK) shows a compositional bias: basic residues.

This sequence belongs to the histone H1/H5 family. HCT subfamily.

In terms of biological role, might have a role analogous to that of eukaryotic histone proteins. The protein is Histone H1-like protein HC1 (hctA) of Chlamydia psittaci (Chlamydophila psittaci).